A 276-amino-acid polypeptide reads, in one-letter code: Large ribosomal subunit protein uL2 (276 aa).

The segment at 219 to 276 (TVRGSVMNPNDHPHGGGEGRSPIGRPSPVTPWGKPALGYKTRKKNKASNKLIVSRRTK) is disordered. Basic residues predominate over residues 258-276 (KTRKKNKASNKLIVSRRTK).

Belongs to the universal ribosomal protein uL2 family. In terms of assembly, part of the 50S ribosomal subunit. Forms a bridge to the 30S subunit in the 70S ribosome.

Its function is as follows. One of the primary rRNA binding proteins. Required for association of the 30S and 50S subunits to form the 70S ribosome, for tRNA binding and peptide bond formation. It has been suggested to have peptidyltransferase activity; this is somewhat controversial. Makes several contacts with the 16S rRNA in the 70S ribosome. This is Large ribosomal subunit protein uL2 from Clostridioides difficile (strain 630) (Peptoclostridium difficile).